The following is a 264-amino-acid chain: Thymidylate synthase (264 aa).

Arg21 contacts dUMP. His51 provides a ligand contact to (6R)-5,10-methylene-5,6,7,8-tetrahydrofolate. Residue 126–127 coordinates dUMP; the sequence is RR. Cys146 (nucleophile) is an active-site residue. Residues 166-169, Asn177, and 207-209 each bind dUMP; these read RSCD and HLY. Asp169 is a (6R)-5,10-methylene-5,6,7,8-tetrahydrofolate binding site. Ala263 is a binding site for (6R)-5,10-methylene-5,6,7,8-tetrahydrofolate.

This sequence belongs to the thymidylate synthase family. Bacterial-type ThyA subfamily. As to quaternary structure, homodimer.

It localises to the cytoplasm. It carries out the reaction dUMP + (6R)-5,10-methylene-5,6,7,8-tetrahydrofolate = 7,8-dihydrofolate + dTMP. It participates in pyrimidine metabolism; dTTP biosynthesis. Functionally, catalyzes the reductive methylation of 2'-deoxyuridine-5'-monophosphate (dUMP) to 2'-deoxythymidine-5'-monophosphate (dTMP) while utilizing 5,10-methylenetetrahydrofolate (mTHF) as the methyl donor and reductant in the reaction, yielding dihydrofolate (DHF) as a by-product. This enzymatic reaction provides an intracellular de novo source of dTMP, an essential precursor for DNA biosynthesis. This chain is Thymidylate synthase, found in Shigella boydii serotype 4 (strain Sb227).